A 149-amino-acid polypeptide reads, in one-letter code: Calmodulin-like protein 3 (149 aa).

4 EF-hand domains span residues 8–43 (EQIA…LGQN), 44–79 (PTEA…KMKD), 81–116 (DSEE…LGEK), and 117–149 (LSDE…LVSK). D21, D23, D25, C27, E32, D57, D59, N61, T63, E68, D94, D96, N98, E105, D130, D132, D134, Q136, and E141 together coordinate Ca(2+).

This sequence belongs to the calmodulin family. In terms of assembly, interacts with MYO10, the interaction is calcium-dependent and essential for MYO10 function in filopodial extension.

Functionally, may function as a specific light chain of unconventional myosin-10 (MYO10), also enhances MYO10 translation, possibly by acting as a chaperone for the emerging MYO10 heavy chain protein. May compete with calmodulin by binding, with different affinities, to cellular substrates. This is Calmodulin-like protein 3 (Calml3) from Rattus norvegicus (Rat).